A 329-amino-acid chain; its full sequence is MDAQNKEVDALVQKITGLHAAIAKLPSLSPSPDVDALFTDLVTACVPPSPVDVTKLGSEAQEMREGLIRLCSEAEGKLEAHYSDMLAAFDNPLDHLGMFPYYSNYINLSKLEYELLARYVPGRHRPARVAFIGSGPLPFSSYVLAARHLPDAMFDNYDLCSAANDRASKLFRADKDVGARMSFHTADVADLTGELAAYDVVFLAALVGMAAEDKTKVIAHLGAHMADGAALVVRSAHGHVGFLYPIVDPQDIGRGGFEVLAVCHPDDDVVNSVIIAHKSKDVHANERPNGVVDSTRGAVPVVSPPCRFGEMVADVTHKREEFTNAEVAF.

The protein belongs to the nicotianamine synthase (NAS)-like family. In terms of assembly, homotrimer.

The enzyme catalyses 3 S-adenosyl-L-methionine = nicotianamine + 3 S-methyl-5'-thioadenosine + 3 H(+). Functionally, synthesizes nicotianamine, a polyamine that is the first intermediate in the synthesis of the phytosiderophores of the mugineic acid type found in gramineae which serve as a sensor for the physiological iron status within the plant, and/or might be involved in the transport of iron. The polypeptide is Nicotianamine synthase 8 (NAS8) (Hordeum vulgare (Barley)).